The sequence spans 576 residues: Tudor and KH domain-containing protein homolog (576 aa).

The disordered stretch occupies residues 40-60 (EEADSGGQRPASGIRGQTEEQ). KH domains lie at 65 to 127 (EVCL…RALL) and 136 to 199 (VVKV…RKML). The span at 209–224 (LVRSMEEVEQRREPRR) shows a compositional bias: basic and acidic residues. The disordered stretch occupies residues 209–253 (LVRSMEEVEQRREPRRSPTNSIASSMYSSQTSLSSHTQPRDKLMA). A compositionally biased stretch (low complexity) spans 232–243 (SSMYSSQTSLSS). The 66-residue stretch at 310-375 (APYVGQIVAA…CELRTDFLTL (66 aa)) folds into the Tudor domain. The disordered stretch occupies residues 556-576 (ATDLENGNNNNASTTNGASAH). A compositionally biased stretch (low complexity) spans 561-576 (NGNNNNASTTNGASAH).

It belongs to the Tdrkh family. Interacts (via C-terminus) with AGO3 (via the N-terminal region when symmetrically methylated on arginine residues); this interaction is RNA-independent and may be required for AGO3 localization to the nuage. Interacts (via Tudor domain) with piwi (via N-terminus). Interacts with tral and me31B. Ovaries (at protein level). Expressed in the ovary and testis.

It is found in the cytoplasm. The protein resides in the nucleus. The protein localises to the cytoplasmic ribonucleoprotein granule. Its function is as follows. Involved in the piwi-interacting RNA (piRNA) metabolic process, which mediates the repression of transposable elements during meiosis by forming complexes composed of piRNAs and Piwi proteins, and governs the methylation and subsequent repression of transposons which is essential for germline integrity. Likely to act by recruiting Piwi proteins such as AGO3 and piwi to the piRNA biogenesis machinery in the nuage. Required for the final steps of primary piRNA biogenesis by participating in the 3' end-trimming of piwi-bound intermediates into mature piRNAs. The sequence is that of Tudor and KH domain-containing protein homolog from Drosophila melanogaster (Fruit fly).